The sequence spans 408 residues: Peptidase T (408 aa).

A Zn(2+)-binding site is contributed by His78. The active site involves Asp80. Asp140 contacts Zn(2+). Glu173 (proton acceptor) is an active-site residue. Residues Glu174, Asp196, and His379 each coordinate Zn(2+).

The protein belongs to the peptidase M20B family. It depends on Zn(2+) as a cofactor.

Its subcellular location is the cytoplasm. The catalysed reaction is Release of the N-terminal residue from a tripeptide.. Cleaves the N-terminal amino acid of tripeptides. This is Peptidase T from Citrobacter koseri (strain ATCC BAA-895 / CDC 4225-83 / SGSC4696).